We begin with the raw amino-acid sequence, 152 residues long: Ribosome maturation factor RimP (152 aa).

It belongs to the RimP family.

The protein resides in the cytoplasm. Its function is as follows. Required for maturation of 30S ribosomal subunits. The sequence is that of Ribosome maturation factor RimP from Porphyromonas gingivalis (strain ATCC 33277 / DSM 20709 / CIP 103683 / JCM 12257 / NCTC 11834 / 2561).